A 252-amino-acid chain; its full sequence is NAC domain-containing protein 83 (252 aa).

The NAC domain occupies 14 to 160 (LPPGFRFHPT…NWVLCRIFLK (147 aa)). A DNA-binding region spans residues 110 to 166 (VGLKKTLVFYKGKPPHGSRTDWIMHEYRLSSSPPSSMGPTQNWVLCRIFLKKRAGNK). Disordered stretches follow at residues 165-194 (NKND…IITT) and 217-252 (LNLL…NSFR). 2 stretches are compositionally biased toward low complexity: residues 180 to 194 (NNNN…IITT) and 219 to 252 (LLPS…NSFR). The segment at 213-226 (RTTDLNLLPSSPSS) is PEST-like.

As to quaternary structure, interacts with NAC007/VND4, NAC026/VND5 and NAC030/VND7. Interacts with the mungbean yellow mosaic virus (MYMV) AC1 replication-associated protein. In terms of tissue distribution, expressed in xylem and phloem cells in roots and inflorescence stems. Highly expressed in senescent leaves. Expressed in roots, and abscission and dehiscence tissues, such as axils of bracts and abscission zones in cauline leaves and siliques.

Its subcellular location is the nucleus. Its function is as follows. Transcriptional repressor that negatively regulates the expression of genes involved in xylem vessel formation. Represses the transcriptional activation activity of NAC030/VND7, which regulates protoxylem vessel differentiation by promoting immature xylem vessel-specific genes expression. Transcriptional activator that regulates the COLD-REGULATED (COR15A and COR15B) and RESPONSIVE TO DEHYDRATION (LTI78/RD29A and LTI65/RD29B) genes by binding directly to their promoters. Mediates signaling crosstalk between salt stress response and leaf aging process. May play a role in DNA replication of mungbean yellow mosaic virus. The chain is NAC domain-containing protein 83 from Arabidopsis thaliana (Mouse-ear cress).